Consider the following 547-residue polypeptide: DEAD-box ATP-dependent RNA helicase 31 (547 aa).

A compositionally biased stretch (acidic residues) spans 1–34 (MFDFGLSEDDSELGEVDEDDGPSGFEDDLFDDEG). Positions 1-74 (MFDFGLSEDD…HTRESGGGDS (74 aa)) are disordered. The span at 53–70 (IKGEPIDQEGVVHTRESG) shows a compositional bias: basic and acidic residues. Residues 79–107 (TRFDECSLSPLTLKGVKAAGYERMTAVQE) carry the Q motif motif. The Helicase ATP-binding domain occupies 110–293 (LPIILKGKDV…HIAMKRDLEF (184 aa)). 123 to 130 (AKTGTGKT) contacts ATP. The DEAD box motif lies at 241–244 (DEAD). One can recognise a Helicase C-terminal domain in the interval 327-478 (LLTDHISENV…TKRKVEKALA (152 aa)).

This sequence belongs to the DEAD box helicase family.

It catalyses the reaction ATP + H2O = ADP + phosphate + H(+). The chain is DEAD-box ATP-dependent RNA helicase 31 from Oryza sativa subsp. japonica (Rice).